A 144-amino-acid polypeptide reads, in one-letter code: Putative RNase YutE (144 aa).

Residue Arg-96 is part of the active site. The RX(4)HXY motif motif lies at 96 to 103 (RKTLVQQY).

This sequence belongs to the HepT RNase toxin family. In terms of assembly, homodimer, probably forms a complex with cognate antitoxin YutD.

In terms of biological role, probable toxic component of a putative type VII toxin-antitoxin (TA) system, probably an RNase. Probably neutralized by cognate antitoxin YutD. In Bacillus subtilis (strain 168), this protein is Putative RNase YutE (yutE).